The primary structure comprises 121 residues: Ribosome-binding factor A (121 aa).

Belongs to the RbfA family. In terms of assembly, monomer. Binds 30S ribosomal subunits, but not 50S ribosomal subunits or 70S ribosomes.

It is found in the cytoplasm. One of several proteins that assist in the late maturation steps of the functional core of the 30S ribosomal subunit. Associates with free 30S ribosomal subunits (but not with 30S subunits that are part of 70S ribosomes or polysomes). Required for efficient processing of 16S rRNA. May interact with the 5'-terminal helix region of 16S rRNA. In Oenococcus oeni (strain ATCC BAA-331 / PSU-1), this protein is Ribosome-binding factor A.